Here is a 29-residue protein sequence, read N- to C-terminus: HSEGTFTSDYSKYLDNRRAKDFVQWLMNT.

Belongs to the glucagon family.

It localises to the secreted. Functionally, promotes hydrolysis of glycogen and lipids, and raises the blood sugar level. The polypeptide is Glucagon (gcg) (Torpedo marmorata (Marbled electric ray)).